The following is a 240-amino-acid chain: Protein GrpE (240 aa).

Polar residues predominate over residues 1–13 (MTDNQRQSTTDGQ). Residues 1 to 89 (MTDNQRQSTT…DAEQKAEEHW (89 aa)) are disordered. Residues 20-38 (AQATAEAAEQTQATQASAA) show a composition bias toward low complexity. Over residues 65-89 (EALRQRVEELEKALADAEQKAEEHW) the composition is skewed to basic and acidic residues.

Belongs to the GrpE family. Homodimer.

The protein resides in the cytoplasm. Its function is as follows. Participates actively in the response to hyperosmotic and heat shock by preventing the aggregation of stress-denatured proteins, in association with DnaK and GrpE. It is the nucleotide exchange factor for DnaK and may function as a thermosensor. Unfolded proteins bind initially to DnaJ; upon interaction with the DnaJ-bound protein, DnaK hydrolyzes its bound ATP, resulting in the formation of a stable complex. GrpE releases ADP from DnaK; ATP binding to DnaK triggers the release of the substrate protein, thus completing the reaction cycle. Several rounds of ATP-dependent interactions between DnaJ, DnaK and GrpE are required for fully efficient folding. In Halorhodospira halophila (strain DSM 244 / SL1) (Ectothiorhodospira halophila (strain DSM 244 / SL1)), this protein is Protein GrpE.